The following is a 312-amino-acid chain: Ribosomal protein L11 methyltransferase (312 aa).

The S-adenosyl-L-methionine site is built by Thr-162, Gly-183, Asp-205, and Asn-248.

This sequence belongs to the methyltransferase superfamily. PrmA family.

The protein localises to the cytoplasm. The enzyme catalyses L-lysyl-[protein] + 3 S-adenosyl-L-methionine = N(6),N(6),N(6)-trimethyl-L-lysyl-[protein] + 3 S-adenosyl-L-homocysteine + 3 H(+). Its function is as follows. Methylates ribosomal protein L11. The chain is Ribosomal protein L11 methyltransferase from Bacillus cereus (strain Q1).